The sequence spans 163 residues: uncharacterized protein (163 aa).

Residues 7-162 (ISISAVKLPQ…NVVYMRLEMS (156 aa)) form the N-acetyltransferase domain.

Belongs to the acetyltransferase family.

The protein resides in the cytoplasm. It is found in the nucleus. This is an uncharacterized protein from Schizosaccharomyces pombe (strain 972 / ATCC 24843) (Fission yeast).